Consider the following 572-residue polypeptide: Dihydroxy-acid dehydratase (572 aa).

Cys57 contributes to the [2Fe-2S] cluster binding site. Asp89 is a Mg(2+) binding site. Position 130 (Cys130) interacts with [2Fe-2S] cluster. Asp131 and Lys132 together coordinate Mg(2+). At Lys132 the chain carries N6-carboxylysine. A [2Fe-2S] cluster-binding site is contributed by Cys202. Glu453 contributes to the Mg(2+) binding site. Catalysis depends on Ser479, which acts as the Proton acceptor.

It belongs to the IlvD/Edd family. As to quaternary structure, homodimer. [2Fe-2S] cluster is required as a cofactor. The cofactor is Mg(2+).

It carries out the reaction (2R)-2,3-dihydroxy-3-methylbutanoate = 3-methyl-2-oxobutanoate + H2O. The enzyme catalyses (2R,3R)-2,3-dihydroxy-3-methylpentanoate = (S)-3-methyl-2-oxopentanoate + H2O. Its pathway is amino-acid biosynthesis; L-isoleucine biosynthesis; L-isoleucine from 2-oxobutanoate: step 3/4. It participates in amino-acid biosynthesis; L-valine biosynthesis; L-valine from pyruvate: step 3/4. In terms of biological role, functions in the biosynthesis of branched-chain amino acids. Catalyzes the dehydration of (2R,3R)-2,3-dihydroxy-3-methylpentanoate (2,3-dihydroxy-3-methylvalerate) into 2-oxo-3-methylpentanoate (2-oxo-3-methylvalerate) and of (2R)-2,3-dihydroxy-3-methylbutanoate (2,3-dihydroxyisovalerate) into 2-oxo-3-methylbutanoate (2-oxoisovalerate), the penultimate precursor to L-isoleucine and L-valine, respectively. The chain is Dihydroxy-acid dehydratase from Streptococcus thermophilus (strain CNRZ 1066).